The primary structure comprises 198 residues: RNA-free ribonuclease P (198 aa).

The protein belongs to the HARP family.

The enzyme catalyses Endonucleolytic cleavage of RNA, removing 5'-extranucleotides from tRNA precursor.. Its function is as follows. RNA-free RNase P that catalyzes the removal of the 5'-leader sequence from pre-tRNA to produce the mature 5'-terminus. The sequence is that of RNA-free ribonuclease P from Nitrosococcus oceani (strain ATCC 19707 / BCRC 17464 / JCM 30415 / NCIMB 11848 / C-107).